The chain runs to 599 residues: Proline--tRNA ligase (599 aa).

This sequence belongs to the class-II aminoacyl-tRNA synthetase family. ProS type 1 subfamily. As to quaternary structure, homodimer.

Its subcellular location is the cytoplasm. The enzyme catalyses tRNA(Pro) + L-proline + ATP = L-prolyl-tRNA(Pro) + AMP + diphosphate. Its function is as follows. Catalyzes the attachment of proline to tRNA(Pro) in a two-step reaction: proline is first activated by ATP to form Pro-AMP and then transferred to the acceptor end of tRNA(Pro). As ProRS can inadvertently accommodate and process non-cognate amino acids such as alanine and cysteine, to avoid such errors it has two additional distinct editing activities against alanine. One activity is designated as 'pretransfer' editing and involves the tRNA(Pro)-independent hydrolysis of activated Ala-AMP. The other activity is designated 'posttransfer' editing and involves deacylation of mischarged Ala-tRNA(Pro). The misacylated Cys-tRNA(Pro) is not edited by ProRS. The protein is Proline--tRNA ligase of Prochlorococcus marinus (strain MIT 9303).